The sequence spans 74 residues: Cytochrome c oxidase subunit 3 (74 aa).

The next 2 membrane-spanning stretches (helical) occupy residues 15 to 37 (SPWP…KWFH) and 42 to 59 (SLFL…YQWW).

Belongs to the cytochrome c oxidase subunit 3 family. Component of the cytochrome c oxidase (complex IV, CIV), a multisubunit enzyme composed of a catalytic core of 3 subunits and several supernumerary subunits. The complex exists as a monomer or a dimer and forms supercomplexes (SCs) in the inner mitochondrial membrane with ubiquinol-cytochrome c oxidoreductase (cytochrome b-c1 complex, complex III, CIII).

It localises to the mitochondrion inner membrane. The catalysed reaction is 4 Fe(II)-[cytochrome c] + O2 + 8 H(+)(in) = 4 Fe(III)-[cytochrome c] + 2 H2O + 4 H(+)(out). Its function is as follows. Component of the cytochrome c oxidase, the last enzyme in the mitochondrial electron transport chain which drives oxidative phosphorylation. The respiratory chain contains 3 multisubunit complexes succinate dehydrogenase (complex II, CII), ubiquinol-cytochrome c oxidoreductase (cytochrome b-c1 complex, complex III, CIII) and cytochrome c oxidase (complex IV, CIV), that cooperate to transfer electrons derived from NADH and succinate to molecular oxygen, creating an electrochemical gradient over the inner membrane that drives transmembrane transport and the ATP synthase. Cytochrome c oxidase is the component of the respiratory chain that catalyzes the reduction of oxygen to water. Electrons originating from reduced cytochrome c in the intermembrane space (IMS) are transferred via the dinuclear copper A center (CU(A)) of subunit 2 and heme A of subunit 1 to the active site in subunit 1, a binuclear center (BNC) formed by heme A3 and copper B (CU(B)). The BNC reduces molecular oxygen to 2 water molecules using 4 electrons from cytochrome c in the IMS and 4 protons from the mitochondrial matrix. The chain is Cytochrome c oxidase subunit 3 (mt:CoIII) from Drosophila simulans (Fruit fly).